Here is a 370-residue protein sequence, read N- to C-terminus: Biotin synthase (370 aa).

The 236-residue stretch at 79-314 (CCGNVVDLCS…KQIIRYAGGR (236 aa)) folds into the Radical SAM core domain. [4Fe-4S] cluster-binding residues include Cys-97, Cys-101, and Cys-104. 4 residues coordinate [2Fe-2S] cluster: Cys-142, Cys-179, Cys-239, and Arg-309.

This sequence belongs to the radical SAM superfamily. Biotin synthase family. Homodimer. It depends on [4Fe-4S] cluster as a cofactor. Requires [2Fe-2S] cluster as cofactor.

It carries out the reaction (4R,5S)-dethiobiotin + (sulfur carrier)-SH + 2 reduced [2Fe-2S]-[ferredoxin] + 2 S-adenosyl-L-methionine = (sulfur carrier)-H + biotin + 2 5'-deoxyadenosine + 2 L-methionine + 2 oxidized [2Fe-2S]-[ferredoxin]. The protein operates within cofactor biosynthesis; biotin biosynthesis; biotin from 7,8-diaminononanoate: step 2/2. Catalyzes the conversion of dethiobiotin (DTB) to biotin by the insertion of a sulfur atom into dethiobiotin via a radical-based mechanism. This chain is Biotin synthase, found in Trichodesmium erythraeum (strain IMS101).